Reading from the N-terminus, the 258-residue chain is MKITKIEKKKRLYLIELDNDESLYVTEDTIVRFMLSKDKVLDNDQLEDMKHFAQLSYGKNLALYFLSFQQRSNKQVADYLRKHEIEEHIIPDIITQLQEEQWIDDTKLADTYIRQNQLNGDKGPQVLKQKLLQKGIASHDIDPILSQTDFSQLAQKVSQKLFDKYQEKLPPKALKDKITQALLTKGFSYDLAKHSLNHLNFDQDNQEIENLLDKELDKQYRKLSRKYDGYTLKQKLYQALYRKGYNSDDINCKLRNYL.

It belongs to the RecX family.

It localises to the cytoplasm. In terms of biological role, modulates RecA activity. The polypeptide is Regulatory protein RecX (Streptococcus pyogenes serotype M12 (strain MGAS2096)).